Here is a 356-residue protein sequence, read N- to C-terminus: 16-methoxy-2,3-dihydro-3-hydroxytabersonine synthase (356 aa).

Cysteine 49, histidine 71, cysteine 102, cysteine 105, cysteine 108, cysteine 116, and cysteine 162 together coordinate Zn(2+). Residue 187 to 192 coordinates NAD(+); it reads GLGAVG.

The protein belongs to the zinc-containing alcohol dehydrogenase family. The cofactor is Zn(2+). Expressed in leaf epidermis.

It catalyses the reaction (3R)-3-hydroxy-16-methoxy-2,3-dihydrotabersonine + A = (3R)-1,2-didehydro-3-hydroxy-16-methoxy-2,3-dihydrotabersonine + AH2. The enzyme catalyses (3R)-3-hydroxy-2,3-dihydrotabersonine + A = (3R)-1,2-didehydro-3-hydroxy-2,3-dihydrotabersonine + AH2. It participates in alkaloid biosynthesis; vindoline biosynthesis. Its function is as follows. Converts the unstable imine alcohols produced by CYP71D1V2/T3O into 3-hydroxy-16-methoxy-2,3-dihydrotabersonine or 3-hydroxy-2,3-dihydrotabersonine. This Catharanthus roseus (Madagascar periwinkle) protein is 16-methoxy-2,3-dihydro-3-hydroxytabersonine synthase.